A 201-amino-acid polypeptide reads, in one-letter code: Probable molybdenum cofactor guanylyltransferase (201 aa).

GTP contacts are provided by residues 6–8, Lys18, Asp65, and Asp97; that span reads LAG. Position 97 (Asp97) interacts with Mg(2+).

It belongs to the MobA family. Mg(2+) is required as a cofactor.

The protein resides in the cytoplasm. The enzyme catalyses Mo-molybdopterin + GTP + H(+) = Mo-molybdopterin guanine dinucleotide + diphosphate. Transfers a GMP moiety from GTP to Mo-molybdopterin (Mo-MPT) cofactor (Moco or molybdenum cofactor) to form Mo-molybdopterin guanine dinucleotide (Mo-MGD) cofactor. The polypeptide is Probable molybdenum cofactor guanylyltransferase (Staphylococcus epidermidis (strain ATCC 35984 / DSM 28319 / BCRC 17069 / CCUG 31568 / BM 3577 / RP62A)).